Reading from the N-terminus, the 240-residue chain is Guanylate kinase (240 aa).

Positions 56–236 constitute a Guanylate kinase-like domain; the sequence is GRIFVITGPS…TLNELKSILL (181 aa). Residue 63–70 participates in ATP binding; the sequence is GPSGVGKS.

Belongs to the guanylate kinase family.

It localises to the cytoplasm. The enzyme catalyses GMP + ATP = GDP + ADP. Functionally, essential for recycling GMP and indirectly, cGMP. The polypeptide is Guanylate kinase (gmk) (Mycoplasma genitalium (strain ATCC 33530 / DSM 19775 / NCTC 10195 / G37) (Mycoplasmoides genitalium)).